The primary structure comprises 403 residues: Esterase LipC (403 aa).

Catalysis depends on residues Ser-237, Asp-334, and His-367.

This sequence belongs to the 'GDXG' lipolytic enzyme family.

It is found in the cell surface. The protein resides in the secreted. It localises to the cell wall. The protein localises to the capsule. It catalyses the reaction a fatty acid ester + H2O = an aliphatic alcohol + a fatty acid + H(+). The enzyme catalyses a butanoate ester + H2O = an aliphatic alcohol + butanoate + H(+). The catalysed reaction is a hexanoate ester + H2O = an aliphatic alcohol + hexanoate + H(+). It carries out the reaction an acetyl ester + H2O = an aliphatic alcohol + acetate + H(+). It catalyses the reaction an octanoate ester + H2O = an aliphatic alcohol + octanoate + H(+). The enzyme catalyses decanoate ester + H2O = decanoate + an aliphatic alcohol + H(+). Its function is as follows. Esterase that can hydrolyze short-chain esters with the carbon chain containing 2 to 10 carbon atoms. Does not have lipase activity. Is highly immunogenic and elicits strong humoral immune responses in both HIV-negative (HIV-) and HIV-positive (HIV+) tuberculosis (TB) patients. Also elicits pro-inflammatory cytokine and chemokine responses from macrophages and pulmonary epithelial cells. May participate in the progression of active tuberculosis both by contributing to the utilization of lipid substrates for bacterial growth and replication, and by modulating immune responses. This is Esterase LipC from Mycobacterium tuberculosis (strain ATCC 25618 / H37Rv).